Here is a 111-residue protein sequence, read N- to C-terminus: Pyrimidine/purine nucleoside phosphorylase 1 (111 aa).

Belongs to the nucleoside phosphorylase PpnP family.

It carries out the reaction a purine D-ribonucleoside + phosphate = a purine nucleobase + alpha-D-ribose 1-phosphate. The catalysed reaction is adenosine + phosphate = alpha-D-ribose 1-phosphate + adenine. The enzyme catalyses cytidine + phosphate = cytosine + alpha-D-ribose 1-phosphate. It catalyses the reaction guanosine + phosphate = alpha-D-ribose 1-phosphate + guanine. It carries out the reaction inosine + phosphate = alpha-D-ribose 1-phosphate + hypoxanthine. The catalysed reaction is thymidine + phosphate = 2-deoxy-alpha-D-ribose 1-phosphate + thymine. The enzyme catalyses uridine + phosphate = alpha-D-ribose 1-phosphate + uracil. It catalyses the reaction xanthosine + phosphate = alpha-D-ribose 1-phosphate + xanthine. In terms of biological role, catalyzes the phosphorolysis of diverse nucleosides, yielding D-ribose 1-phosphate and the respective free bases. Can use uridine, adenosine, guanosine, cytidine, thymidine, inosine and xanthosine as substrates. Also catalyzes the reverse reactions. The chain is Pyrimidine/purine nucleoside phosphorylase 1 from Psychrobacter arcticus (strain DSM 17307 / VKM B-2377 / 273-4).